Reading from the N-terminus, the 91-residue chain is DNA/RNA-binding protein Alba (91 aa).

The protein belongs to the histone-like Alba family.

The protein resides in the cytoplasm. It localises to the chromosome. In terms of biological role, binds double-stranded DNA tightly but without sequence specificity. Involved in DNA compaction. This chain is DNA/RNA-binding protein Alba, found in Methanoculleus marisnigri (strain ATCC 35101 / DSM 1498 / JR1).